Consider the following 555-residue polypeptide: MKDTVMAYLLENSIKFKGKPNPKAAMGKILGENPDLRSKVKEVNEVISEVLKEIETMSLEEQQAKLDELAPEGLGQKTERKRKEIELKNVKGNVAMRFAPNPSGPLHIGHARASVLNDFFTKKYNGKLVLRLEDTDAKRVLPEAYEMIQEDLNWLGVKVDEVIVQSERLEIYYEYGRKLIEMGHAYVCDCDAEEFRNLREQGIPCKCRDATPEENIVLWEKMLSGEVENVAVRLKTDIAHKNPSIRDFPIFRIERTPHPKNGTKYHVYPLMNLSVTVDDHLLGMTHVLRGKDHIVNTEKQEYIYNYFGWEIPEYIHYGILKIEGPVLSTSKMHAGILSGEYSGWDDARLGTLRALRKRGIRPEALYKLMVEIGIKQADVRFAWENLYAANKDVIDKDARRFFFVESPKKVVISGAENKKIDLRMHPDRSELGNRELLFDGEIYVSDDLEAGKMYRLMELFNIVVERIENDIIYAKYDSDDLAVAKSNRASIIHWIPVKDSIPVTVIDENAENIEGFAEKDFAVVKKDDFVQFERFGFVRVDEKEDNGYICYLTHK.

Residues 100-110 (PNPSGPLHIGH) carry the 'HIGH' region motif.

The protein belongs to the class-I aminoacyl-tRNA synthetase family. Glutamate--tRNA ligase type 2 subfamily.

The protein resides in the cytoplasm. It carries out the reaction tRNA(Glu) + L-glutamate + ATP = L-glutamyl-tRNA(Glu) + AMP + diphosphate. Its function is as follows. Catalyzes the attachment of glutamate to tRNA(Glu) in a two-step reaction: glutamate is first activated by ATP to form Glu-AMP and then transferred to the acceptor end of tRNA(Glu). The protein is Glutamate--tRNA ligase of Methanococcus maripaludis (strain C6 / ATCC BAA-1332).